The following is a 220-amino-acid chain: uncharacterized protein (220 aa).

The N-terminal stretch at 1 to 25 (MSCGTYKRGSLTFLLVVALAVPVFC) is a signal peptide.

In terms of tissue distribution, nacreous layer of shell (at protein level). Expressed primarily in the mantle with highest level in the mantle pallium and lower level in the mantle edge.

Its subcellular location is the secreted. This is an uncharacterized protein from Margaritifera margaritifera (Freshwater pearl mussel).